The sequence spans 458 residues: Methylenetetrahydrofolate--tRNA-(uracil-5-)-methyltransferase TrmFO (458 aa).

An FAD-binding site is contributed by 11-16 (GGGMAG).

It belongs to the MnmG family. TrmFO subfamily. It depends on FAD as a cofactor.

The protein localises to the cytoplasm. The catalysed reaction is uridine(54) in tRNA + (6R)-5,10-methylene-5,6,7,8-tetrahydrofolate + NADH + H(+) = 5-methyluridine(54) in tRNA + (6S)-5,6,7,8-tetrahydrofolate + NAD(+). It catalyses the reaction uridine(54) in tRNA + (6R)-5,10-methylene-5,6,7,8-tetrahydrofolate + NADPH + H(+) = 5-methyluridine(54) in tRNA + (6S)-5,6,7,8-tetrahydrofolate + NADP(+). Functionally, catalyzes the folate-dependent formation of 5-methyl-uridine at position 54 (M-5-U54) in all tRNAs. The protein is Methylenetetrahydrofolate--tRNA-(uracil-5-)-methyltransferase TrmFO of Jannaschia sp. (strain CCS1).